The primary structure comprises 502 residues: MELKFNLKGAFKTSTDPTGAKEVIAQYFDEANNTILKKGAPEGQGAKITQWDIVDGSIELTIESGRYVRAHDAIMRLKKPLAAKLGKEFRIGIRGVDVKKFTISMPAEGEIGNMNIPHVSNISKVEGGLILELNVGESELERRIPDRILTLMEEKVRAKDYGGKAEHWQILWESDKKEHTFAGDPTQEMMKHGWIKRGASRGQWIHGPQSTKMFRTFEKIVYDELLEPLGYREMIFPKLVPWEVWQKSGHAKGVYPEIYYVCPPKTRDPAYWEEVSDHYKVTHEVPTELIKSKIGDPIGGLCYAQCPPFWMYLQGETIPTDEFPIKVFDKSGTSHRYESGGIHGIERVDEFHRVEIVWLGTKEQVIETARKLHERYMHIFNEILDLEWRKAWVTPWFMAQEGLTGLSEQGEAGTTDYEAPLPYRGDDGEWLEFQNVSINGNKYPSGFNVKSQTGEELWSGCSGVGLERWASAFFAQKGLDPENWPEEFRKRVGEVPKGIRFL.

Position 304 (A304) interacts with L-serine. C306 contacts Zn(2+). R336 serves as a coordination point for L-serine. ATP contacts are provided by residues 336-338 (RYE) and 347-348 (RV). L-serine-binding positions include 353–355 (RVE) and Q400. E355 is a Zn(2+) binding site. E432 lines the ATP pocket. L-serine is bound at residue N435. C461 contributes to the Zn(2+) binding site. ATP is bound at residue R468.

It belongs to the class-II aminoacyl-tRNA synthetase family. Type-2 seryl-tRNA synthetase subfamily. Homodimer. Zn(2+) serves as cofactor.

Its subcellular location is the cytoplasm. It carries out the reaction tRNA(Ser) + L-serine + ATP = L-seryl-tRNA(Ser) + AMP + diphosphate + H(+). The enzyme catalyses tRNA(Sec) + L-serine + ATP = L-seryl-tRNA(Sec) + AMP + diphosphate + H(+). It functions in the pathway aminoacyl-tRNA biosynthesis; selenocysteinyl-tRNA(Sec) biosynthesis; L-seryl-tRNA(Sec) from L-serine and tRNA(Sec): step 1/1. Its function is as follows. Catalyzes the attachment of serine to tRNA(Ser). Is also able to aminoacylate tRNA(Sec) with serine, to form the misacylated tRNA L-seryl-tRNA(Sec), which will be further converted into selenocysteinyl-tRNA(Sec). This chain is Type-2 serine--tRNA ligase, found in Methanococcoides burtonii (strain DSM 6242 / NBRC 107633 / OCM 468 / ACE-M).